A 533-amino-acid chain; its full sequence is Tryptophan N-monooxygenase CYP79A68 (533 aa).

A helical transmembrane segment spans residues 12-32 (VTPPISLSLAFIIFMFLVKFI). A glycan (N-linked (GlcNAc...) asparagine) is linked at Asn209. Cys471 is a heme binding site.

Belongs to the cytochrome P450 family. The cofactor is heme. As to expression, confined to buds.

It is found in the membrane. It carries out the reaction L-tryptophan + 2 reduced [NADPH--hemoprotein reductase] + 2 O2 = (E)-(indol-3-yl)acetaldehyde oxime + 2 oxidized [NADPH--hemoprotein reductase] + CO2 + 3 H2O + 2 H(+). Its function is as follows. Catalyzes with low efficiency E and Z isomers of indole-3-acetaldoxime from tryptophan (Trp). The polypeptide is Tryptophan N-monooxygenase CYP79A68 (Prunus mume (Japanese apricot)).